The primary structure comprises 155 residues: Troponin C, isoform 2 (155 aa).

4 EF-hand domains span residues 11 to 46 (EQIAVLQKAFNSFDHQKTGSIPTEMVADILRLMGQP), 47 to 82 (FDRQILDELIDEVDEDKSGRLEFEEFVQLAAKFIVE), 87 to 122 (AMQKELREAFRLYDKQGNGYIPTSCLKEILKELDDQ), and 123 to 155 (LTEQELDIMIEEIDSDGSGTVDFDEFMEMMTGE). 5 residues coordinate Ca(2+): aspartate 60, aspartate 62, serine 64, arginine 66, and glutamate 71. Residues aspartate 136, aspartate 138, serine 140, threonine 142, and glutamate 147 each coordinate Ca(2+).

It belongs to the troponin C family. As to expression, accumulates almost exclusively in larval muscles.

The sequence is that of Troponin C, isoform 2 (TpnC47D) from Drosophila melanogaster (Fruit fly).